The following is an 85-amino-acid chain: MASLLSPIIKLLSYVIRCYQLIISPLIKPHCRFLPTCSQYSITAIHRFGIFKGIWLTLIRILRCNPWSQGGEDQVPLNIFDKREY.

The protein belongs to the UPF0161 family.

Its subcellular location is the cell membrane. In terms of biological role, could be involved in insertion of integral membrane proteins into the membrane. This is Putative membrane protein insertion efficiency factor from Baumannia cicadellinicola subsp. Homalodisca coagulata.